The chain runs to 367 residues: Epoxide hydrolase 3 (367 aa).

A helical membrane pass occupies residues 21–41; that stretch reads GVFFWVLVYVAALLAAVSYIP. Residue Asp173 is the Nucleophile of the active site. The active-site Proton donor is the Tyr285. Residue His340 is the Proton acceptor of the active site.

This sequence belongs to the AB hydrolase superfamily. Epoxide hydrolase family.

It is found in the microsome membrane. It carries out the reaction an epoxide + H2O = an ethanediol. The catalysed reaction is 9,10-epoxyoctadecanoate + H2O = 9,10-dihydroxyoctadecanoate. It catalyses the reaction 9,10-epoxy-(12Z)-octadecenoate + H2O = 9,10-dihydroxy-(12Z)-octadecenoate. The enzyme catalyses 8,9-epoxy-(5Z,11Z,14Z)-eicosatrienoate + H2O = 8,9-dihydroxy-(5Z,11Z,14Z)-eicosatrienoate. It carries out the reaction 11,12-epoxy-(5Z,8Z,14Z)-eicosatrienoate + H2O = 11,12-dihydroxy-(5Z,8Z,14Z)-eicosatrienoate. The catalysed reaction is 14,15-epoxy-(5Z,8Z,11Z)-eicosatrienoate + H2O = 14,15-dihydroxy-(5Z,8Z,11Z)-eicosatrienoate. Its activity is regulated as follows. Inhibited by 1-(1-acetylpiperidin-4-yl)-3-(4-(trifl uoromethoxy)phenyl)urea (TPAU), 1-cyclohexyl-3-dodecylurea (CDU), 12-(3-adamantan-1-yl-ureido)-dodecanoic acid (AUDA), 1-((3S, 5S, 7S)-adamantan-1-yl)-3-(5-(2-(2-ethoxyethoxy) ethoxy)pentyl)urea (AEPU) and to a lesser extent by 8-(3-((3S, 5S, 7S)-adamantan-1-yl)ureido) octanoic acid (AUOA). Catalyzes the hydrolysis of epoxide-containing fatty acids. Active in vitro against epoxyeicosatrienoic acids (EETs) including 8,9-EET, 9,10-EET, 11,12-EET and 14,15-EET and leukotoxin. The polypeptide is Epoxide hydrolase 3 (ephx3) (Xenopus tropicalis (Western clawed frog)).